The sequence spans 1343 residues: DNA-directed RNA polymerase subunit beta (1343 aa).

Belongs to the RNA polymerase beta chain family. In terms of assembly, the RNAP catalytic core consists of 2 alpha, 1 beta, 1 beta' and 1 omega subunit. When a sigma factor is associated with the core the holoenzyme is formed, which can initiate transcription.

The catalysed reaction is RNA(n) + a ribonucleoside 5'-triphosphate = RNA(n+1) + diphosphate. DNA-dependent RNA polymerase catalyzes the transcription of DNA into RNA using the four ribonucleoside triphosphates as substrates. The protein is DNA-directed RNA polymerase subunit beta of Haemophilus influenzae (strain PittGG).